Reading from the N-terminus, the 343-residue chain is Pseudaminic acid synthase (343 aa).

Residues 287–343 (SLYASKDIKKGEIFSEENVKSVRPSFGLHPKFYQELLGKKASKDIEFGDALKESDFR) form the AFP-like domain.

This sequence belongs to the pseudaminic acid synthase family. A divalent metal cation is required as a cofactor.

It carries out the reaction 2,4-diacetamido-2,4,6-trideoxy-beta-L-altrose + phosphoenolpyruvate + H2O = pseudaminate + phosphate. In terms of biological role, catalyzes the fifth step in the biosynthesis of pseudaminic acid, a sialic-acid-like sugar that is used to modify flagellin. Catalyzes the condensation of phosphoenolpyruvate with 2,4-diacetamido-2,4,6-trideoxy-beta-l-altropyranose, forming pseudaminic acid. The chain is Pseudaminic acid synthase (pseI) from Campylobacter jejuni subsp. jejuni serotype O:23/36 (strain 81-176).